The sequence spans 348 residues: tRNA-specific 2-thiouridylase MnmA (348 aa).

ATP is bound by residues 8–15 and M34; that span reads LLSGGVDS. C105 acts as the Nucleophile in catalysis. Residues C105 and C197 are joined by a disulfide bond. G129 contacts ATP. The interaction with tRNA stretch occupies residues 147 to 149; sequence KDQ. C197 (cysteine persulfide intermediate) is an active-site residue.

This sequence belongs to the MnmA/TRMU family.

The protein localises to the cytoplasm. The catalysed reaction is S-sulfanyl-L-cysteinyl-[protein] + uridine(34) in tRNA + AH2 + ATP = 2-thiouridine(34) in tRNA + L-cysteinyl-[protein] + A + AMP + diphosphate + H(+). In terms of biological role, catalyzes the 2-thiolation of uridine at the wobble position (U34) of tRNA, leading to the formation of s(2)U34. The chain is tRNA-specific 2-thiouridylase MnmA from Fervidobacterium nodosum (strain ATCC 35602 / DSM 5306 / Rt17-B1).